Reading from the N-terminus, the 695-residue chain is Probable serine/threonine-protein kinase DDB_G0279405 (695 aa).

Disordered stretches follow at residues 119–138 (IVAQ…PQPQ) and 149–192 (QIPT…KRHK). Positions 124–138 (QPQPQPQPQPQPQPQ) are enriched in pro residues. The span at 149–160 (QIPTTPPQQISQ) shows a compositional bias: low complexity. Positions 161–173 (FNITGNKSPSSIG) are enriched in polar residues. The Protein kinase domain maps to 201-462 (YVFVRKLGKG…IAEIKSHKWT (262 aa)). Residues 207-215 (LGKGTFGKV) and K230 each bind ATP. D329 functions as the Proton acceptor in the catalytic mechanism. Residues 491-580 (TDHTIKPSDN…NQNQNNNNNS (90 aa)) are disordered. Residues 510 to 528 (LSSSSGGESSGIIGSSNES) show a composition bias toward low complexity. Positions 529–541 (KSMYNNVNSKQKI) are enriched in polar residues. Positions 542–580 (QNQNQNQNQNQNQNQNQNQNQNHNQNQNQNQNQNNNNNS) are enriched in low complexity.

The protein belongs to the protein kinase superfamily. Ser/Thr protein kinase family.

The enzyme catalyses L-seryl-[protein] + ATP = O-phospho-L-seryl-[protein] + ADP + H(+). It catalyses the reaction L-threonyl-[protein] + ATP = O-phospho-L-threonyl-[protein] + ADP + H(+). The polypeptide is Probable serine/threonine-protein kinase DDB_G0279405 (Dictyostelium discoideum (Social amoeba)).